Consider the following 130-residue polypeptide: Small ribosomal subunit protein uS8 (130 aa).

This sequence belongs to the universal ribosomal protein uS8 family. In terms of assembly, part of the 30S ribosomal subunit. Contacts proteins S5 and S12.

Its function is as follows. One of the primary rRNA binding proteins, it binds directly to 16S rRNA central domain where it helps coordinate assembly of the platform of the 30S subunit. The polypeptide is Small ribosomal subunit protein uS8 (Shigella boydii serotype 18 (strain CDC 3083-94 / BS512)).